A 605-amino-acid polypeptide reads, in one-letter code: Elongation factor 4 (605 aa).

Positions 9-192 (SRIRNFCIIA…AIIARVPAPA (184 aa)) constitute a tr-type G domain. GTP is bound by residues 21–26 (DHGKST) and 139–142 (NKID).

The protein belongs to the TRAFAC class translation factor GTPase superfamily. Classic translation factor GTPase family. LepA subfamily.

Its subcellular location is the cell inner membrane. It carries out the reaction GTP + H2O = GDP + phosphate + H(+). Required for accurate and efficient protein synthesis under certain stress conditions. May act as a fidelity factor of the translation reaction, by catalyzing a one-codon backward translocation of tRNAs on improperly translocated ribosomes. Back-translocation proceeds from a post-translocation (POST) complex to a pre-translocation (PRE) complex, thus giving elongation factor G a second chance to translocate the tRNAs correctly. Binds to ribosomes in a GTP-dependent manner. The polypeptide is Elongation factor 4 (Chlorobium luteolum (strain DSM 273 / BCRC 81028 / 2530) (Pelodictyon luteolum)).